Reading from the N-terminus, the 470-residue chain is Probable E3 ubiquitin-protein ligase TRIML1 (470 aa).

The RING-type zinc finger occupies 22-63 (CFICLDYFSSPVTTECGHSFCLMCLLKSWEEHNTPLSCPECW). 2 coiled-coil regions span residues 135–170 (SEAE…KERV) and 196–235 (KEEE…GKMI). The B30.2/SPRY domain occupies 273 to 470 (TELSLCHITG…NTDPLIICHI (198 aa)).

As to quaternary structure, interacts with USP5. Testis.

The enzyme catalyses S-ubiquitinyl-[E2 ubiquitin-conjugating enzyme]-L-cysteine + [acceptor protein]-L-lysine = [E2 ubiquitin-conjugating enzyme]-L-cysteine + N(6)-ubiquitinyl-[acceptor protein]-L-lysine.. Its pathway is protein modification; protein ubiquitination. Probable E3 ubiquitin-protein ligase which plays an important role in blastocyst development. Involved in progression of blastocyst stage and subsequent embryo development. The polypeptide is Probable E3 ubiquitin-protein ligase TRIML1 (Triml1) (Mus musculus (Mouse)).